A 122-amino-acid polypeptide reads, in one-letter code: NADH-quinone oxidoreductase subunit A (122 aa).

3 consecutive transmembrane segments (helical) span residues 12 to 32 (ILLF…AGWL), 67 to 87 (IAIL…WAVV), and 91 to 111 (IGWF…VGFI).

The protein belongs to the complex I subunit 3 family. In terms of assembly, NDH-1 is composed of 14 different subunits. Subunits NuoA, H, J, K, L, M, N constitute the membrane sector of the complex.

Its subcellular location is the cell inner membrane. The enzyme catalyses a quinone + NADH + 5 H(+)(in) = a quinol + NAD(+) + 4 H(+)(out). Functionally, NDH-1 shuttles electrons from NADH, via FMN and iron-sulfur (Fe-S) centers, to quinones in the respiratory chain. The immediate electron acceptor for the enzyme in this species is believed to be ubiquinone. Couples the redox reaction to proton translocation (for every two electrons transferred, four hydrogen ions are translocated across the cytoplasmic membrane), and thus conserves the redox energy in a proton gradient. This Nitrosomonas europaea (strain ATCC 19718 / CIP 103999 / KCTC 2705 / NBRC 14298) protein is NADH-quinone oxidoreductase subunit A.